The chain runs to 203 residues: Small ribosomal subunit protein uS4 (203 aa).

The S4 RNA-binding domain occupies 93-154 (RRFDNVVFRA…KSKNMDAVTE (62 aa)).

The protein belongs to the universal ribosomal protein uS4 family. Part of the 30S ribosomal subunit. Contacts protein S5. The interaction surface between S4 and S5 is involved in control of translational fidelity.

Functionally, one of the primary rRNA binding proteins, it binds directly to 16S rRNA where it nucleates assembly of the body of the 30S subunit. With S5 and S12 plays an important role in translational accuracy. The chain is Small ribosomal subunit protein uS4 from Prosthecochloris aestuarii (strain DSM 271 / SK 413).